Consider the following 169-residue polypeptide: Nucleoside diphosphate kinase 3 (169 aa).

6 residues coordinate ADP: Lys29, Arg105, Thr111, Arg122, Val129, and Asn132. The active-site Pros-phosphohistidine intermediate is His135.

Belongs to the NDK family. Homohexamer. Interacts (via its N-terminal region) with KAT5; this interaction enables recruitment of NME3 at DNA damage sites where it plays a role in the repair of DNA. Found in association with several ciliary nephronophthisis proteins, including NEK8, CEP164, ANKS6. The cofactor is Mg(2+).

Its subcellular location is the mitochondrion outer membrane. It is found in the cytoplasm. It localises to the cytoskeleton. The protein localises to the cilium basal body. The enzyme catalyses a 2'-deoxyribonucleoside 5'-diphosphate + ATP = a 2'-deoxyribonucleoside 5'-triphosphate + ADP. It catalyses the reaction a ribonucleoside 5'-diphosphate + ATP = a ribonucleoside 5'-triphosphate + ADP. In terms of biological role, catalyzes the phosphorylation of ribonucleosides and deoxyribonucleoside diphosphates, other than ATP, into the corresponding triphosphates with ATP as the major phosphate donor. The ATP gamma phosphate is transferred to the nucleoside diphosphate beta phosphate via a ping-pong mechanism, using a phosphorylated active-site intermediate. Through the catalyzed exchange of gamma-phosphate between di- and triphosphonucleosides participates in regulation of intracellular nucleotide homeostasis. Inhibits granulocyte differentiation. May be required for ciliary function during renal development. Functionally, independently of its kinase activity, facilitates mitochondrial tethering prior to membrane fusion through its direct membrane-binding and hexamerization. Implicated in repair of both single- and double-stranded breaks in DNA through its association with the ribonucleotide reductase complex (RNR complex) via its interaction with the histone acetyltransferase KAT5, this interaction enables recruitment of NME3 at DNA damage sites where it plays a role in the repair of DNA, independently of its kinase activity. This is Nucleoside diphosphate kinase 3 (Nme3) from Mus musculus (Mouse).